A 115-amino-acid chain; its full sequence is Large ribosomal subunit protein uL22 (115 aa).

This sequence belongs to the universal ribosomal protein uL22 family. Part of the 50S ribosomal subunit.

In terms of biological role, this protein binds specifically to 23S rRNA; its binding is stimulated by other ribosomal proteins, e.g. L4, L17, and L20. It is important during the early stages of 50S assembly. It makes multiple contacts with different domains of the 23S rRNA in the assembled 50S subunit and ribosome. The globular domain of the protein is located near the polypeptide exit tunnel on the outside of the subunit, while an extended beta-hairpin is found that lines the wall of the exit tunnel in the center of the 70S ribosome. The chain is Large ribosomal subunit protein uL22 from Lactiplantibacillus plantarum (strain ATCC BAA-793 / NCIMB 8826 / WCFS1) (Lactobacillus plantarum).